The following is a 471-amino-acid chain: Ubiquitin carboxyl-terminal hydrolase calypso (471 aa).

Residues 45-276 enclose the UCH catalytic domain; it reads GWLELESDPG…IRFNLMAVVP (232 aa). Residue Cys-131 is the Nucleophile of the active site. Catalysis depends on His-213, which acts as the Proton donor. In terms of domain architecture, ULD spans 375–403; the sequence is NYDKFICTFLSMLAHQGVLGELVSQHLLP. The positively charged C-terminal tail required for binding nucleosomes stretch occupies residues 405 to 471; that stretch reads KKVSGQGAAN…KGRNKCRKRK (67 aa). The segment at 410 to 471 is disordered; sequence QGAANRISKQ…KGRNKCRKRK (62 aa). Residues 420–447 are compositionally biased toward low complexity; it reads STTASAGGSTTGATASTPKTQQQQAAAA. Residues 457–471 are compositionally biased toward basic residues; sequence PGRRRKGRNKCRKRK.

The protein belongs to the peptidase C12 family. BAP1 subfamily. As to quaternary structure, catalytic component of the polycomb repressive deubiquitinase (PR-DUB) complex, at least composed of caly/calypso, Asx and sba (MBD5/6 homolog). The PR-DUB complex associates with nucleosomes to mediate deubiquitination of histone H2AK118ub1 substrates; the association requires the positively charged C-terminal tail of caly, probably due to direct binding of DNA. Interacts (via ULD domain) with Asx (via DEUBAD domain); the interaction produces a stable heterodimer with a composite binding site for ubiquitin. Homodimerizes (via coiled-coil hinge-region between the UCH and ULD domains) to mediate assembly of 2 copies of the caly-Asx heterodimer into a bisymmetric tetramer; dimerization enhances PR-DUB association with nucleosomes.

The protein resides in the nucleus. It catalyses the reaction Thiol-dependent hydrolysis of ester, thioester, amide, peptide and isopeptide bonds formed by the C-terminal Gly of ubiquitin (a 76-residue protein attached to proteins as an intracellular targeting signal).. Its function is as follows. Catalytic component of the polycomb repressive deubiquitinase (PR-DUB) complex, a complex that specifically mediates deubiquitination of histone H2A monoubiquitinated at 'Lys-119' (H2AK118ub1). Mediates bisymmetric organization of the PR-DUB complex and is involved in association with nucleosomes to mediate deubiquitination. Does not deubiquitinate monoubiquitinated histone H2B. Required to maintain the transcriptionally repressive state of homeotic genes throughout development. The PR-DUB complex has weak or no activity toward 'Lys-48'- and 'Lys-63'-linked polyubiquitin chains. Polycomb group (PcG) protein. The protein is Ubiquitin carboxyl-terminal hydrolase calypso of Drosophila yakuba (Fruit fly).